Here is a 169-residue protein sequence, read N- to C-terminus: NAD(P)H-quinone oxidoreductase subunit J, chloroplastic (169 aa).

Belongs to the complex I 30 kDa subunit family. As to quaternary structure, NDH is composed of at least 16 different subunits, 5 of which are encoded in the nucleus.

The protein localises to the plastid. It localises to the chloroplast thylakoid membrane. The catalysed reaction is a plastoquinone + NADH + (n+1) H(+)(in) = a plastoquinol + NAD(+) + n H(+)(out). It catalyses the reaction a plastoquinone + NADPH + (n+1) H(+)(in) = a plastoquinol + NADP(+) + n H(+)(out). NDH shuttles electrons from NAD(P)H:plastoquinone, via FMN and iron-sulfur (Fe-S) centers, to quinones in the photosynthetic chain and possibly in a chloroplast respiratory chain. The immediate electron acceptor for the enzyme in this species is believed to be plastoquinone. Couples the redox reaction to proton translocation, and thus conserves the redox energy in a proton gradient. This is NAD(P)H-quinone oxidoreductase subunit J, chloroplastic from Staurastrum punctulatum (Green alga).